A 303-amino-acid polypeptide reads, in one-letter code: Target of rapamycin complex subunit LST8 (303 aa).

7 WD repeats span residues 1–27 (MSVI…CSRT), 30–68 (HSDS…PNPV), 73–112 (GHRG…IPRN), 114–153 (KHNA…CTHQ), 157–196 (EDDT…DASH), 205–244 (AHST…KLET), and 248–287 (GHQR…IVRQ).

The protein belongs to the WD repeat LST8 family. As to quaternary structure, the target of rapamycin complex 1 (TORC1) is composed of at least KOG1, LST8, TCO89 and either TOR1 (TORC1-A) or TOR2 (TORC1-B). TORC1 binds to and is inhibited by FKBP-rapamycin. Interacts with PIB2; following activation of PIB2 by glutamine or cysteine and as part of the TORC1 complex. The target of rapamycin complex 2 (TORC2) is composed of at least AVO1, AVO2, BIT61, LST8, TOR2 and TSC11. TORC2 forms a homodimer. Contrary to TORC1, TORC2 does not bind to and is not sensitive to FKBP-rapamycin. LST8 binds to the C-terminal kinase domain in TOR2.

It is found in the cell membrane. Its subcellular location is the vacuole membrane. In terms of biological role, essential component of both TORC1 and TORC2. TORC1 regulates multiple cellular processes to control cell growth in response to environmental signals. Nutrient limitation and environmental stress signals cause inactivation of TORC1. Active TORC1 positively controls ribosome biogenesis via control of rRNA, ribosomal protein and tRNA gene expression, and rRNA processing. TORC1 positively controls protein biosynthesis by regulation of mRNA stability, translation initiation factor activity, and high-affinity amino acid permeases that serve to provide amino acids for use by the translation machinery. TORC1 also promotes growth by sequestering a number of nutrient and general stress-responsive transcription factors in the cytoplasm. TORC1 negatively controls macroautophagy, a process to recycle surplus cytoplasmic mass under nutrient starvation conditions. LST8 is involved in the negative regulation of transcription factors GLN3 and RTG1-RTG3, limiting the synthesis of alpha-ketoglutarate, glutamate and glutamine. LST8 is required for targeting of amino acid permeases (AAPs) to the plasma membrane. TORC2 regulates cell cycle-dependent polarization of the actin-cytoskeleton, cell wall integrity, and receptor endocytosis. TORC2 controls polarity of the actin cytoskeleton, which is required for orienting the secretory pathway toward discrete growth sites, via the RHO1/PKC1/MAPK cell integrity pathway. LST8 is involved in maintenance of cell wall integrity. LST8 modulates TOR2 kinase activity. This chain is Target of rapamycin complex subunit LST8, found in Saccharomyces cerevisiae (strain ATCC 204508 / S288c) (Baker's yeast).